Consider the following 497-residue polypeptide: Hexokinase-1 (497 aa).

The chain crosses the membrane as a helical span at residues 4 to 24 (ATVGAAVIGAATVCAVAALIV). The Hexokinase domain occupies 35 to 487 (ARAMAILREF…SGIGAALLAA (453 aa)). The interval 90 to 228 (TGDEAGVFYA…GVDMRVSALV (139 aa)) is hexokinase small subdomain. Residues glycine 104, threonine 105, and asparagine 106 each coordinate ADP. Positions 194, 195, 229, and 230 each coordinate D-glucose. Residues 229 to 476 (NDTVGTLAGG…TSIVFEHSND (248 aa)) form a hexokinase large subdomain region. Residue threonine 253 coordinates ADP. The D-glucose site is built by asparagine 256, glutamate 284, and glutamate 315. Glycine 441 lines the ADP pocket.

The protein belongs to the hexokinase family.

The protein resides in the plastid. Its subcellular location is the chloroplast outer membrane. It carries out the reaction a D-hexose + ATP = a D-hexose 6-phosphate + ADP + H(+). The enzyme catalyses D-fructose + ATP = D-fructose 6-phosphate + ADP + H(+). The catalysed reaction is D-glucose + ATP = D-glucose 6-phosphate + ADP + H(+). It functions in the pathway carbohydrate metabolism; hexose metabolism. Its pathway is carbohydrate degradation; glycolysis; D-glyceraldehyde 3-phosphate and glycerone phosphate from D-glucose: step 1/4. In terms of biological role, fructose and glucose phosphorylating enzyme. This chain is Hexokinase-1 (HXK1), found in Nicotiana tabacum (Common tobacco).